Here is a 147-residue protein sequence, read N- to C-terminus: MINDDLIVLLEPIIKNMGYELWGCEYLSQGKHSLLRIYIDKPDGIGIDDCQEVSKQVSAMLDVEDPIPGHYSLEISSPGIPRPLFSIWQYQRYLGYEIHVKTFKPVNGKRKLSGIIVSASEDTIVLDINNEHQEILLSNIVKANLTV.

This sequence belongs to the RimP family.

It is found in the cytoplasm. In terms of biological role, required for maturation of 30S ribosomal subunits. The sequence is that of Ribosome maturation factor RimP from Legionella pneumophila (strain Paris).